The chain runs to 37 residues: Large ribosomal subunit protein bL36 (37 aa).

This sequence belongs to the bacterial ribosomal protein bL36 family.

In Clostridium perfringens (strain ATCC 13124 / DSM 756 / JCM 1290 / NCIMB 6125 / NCTC 8237 / Type A), this protein is Large ribosomal subunit protein bL36.